Reading from the N-terminus, the 374-residue chain is MSVATLQRKLPEAAPRRAGQTELHPELNRAQVRFIGLGKTYQGQQGPVQALHDIDLSIQRGEVFGIIGRSGAGKSSLIRTINRLEQPSSGRVLIDQVDIGDFDEDRLVALRRRIGMIFQHFNLMSAKTVWHNVELPLKVAGVPKAERERKVRELLELVGLKDKHRAYPAQLSGGQKQRVGIARALVHDPEILLCDEATSALDPETTQSILGLLKEINQRLGLTIILITHEMAVIRDICDRVVVLEHGRIVEQGPVWEVFGNPQHEVSKTLLAPLQHGLPEELQNRLQSHPTSSDAALVLSLRFTGSSHEEPDLAALFGALGGRVRLLQGGVERIQGHALGQLLLAVQGSSLEAAQLRQRAGQWAQQVEVLGYVV.

The disordered stretch occupies residues 1–22; sequence MSVATLQRKLPEAAPRRAGQTE. The region spanning 32–271 is the ABC transporter domain; the sequence is VRFIGLGKTY…PQHEVSKTLL (240 aa). 68–75 lines the ATP pocket; the sequence is GRSGAGKS.

This sequence belongs to the ABC transporter superfamily. Methionine importer (TC 3.A.1.24) family. In terms of assembly, the complex is composed of two ATP-binding proteins (MetN), two transmembrane proteins (MetI) and a solute-binding protein (MetQ).

It localises to the cell inner membrane. It catalyses the reaction L-methionine(out) + ATP + H2O = L-methionine(in) + ADP + phosphate + H(+). The catalysed reaction is D-methionine(out) + ATP + H2O = D-methionine(in) + ADP + phosphate + H(+). Its function is as follows. Part of the ABC transporter complex MetNIQ involved in methionine import. Responsible for energy coupling to the transport system. The chain is Methionine import ATP-binding protein MetN 2 from Pseudomonas fluorescens (strain ATCC BAA-477 / NRRL B-23932 / Pf-5).